The chain runs to 671 residues: Amidase chry2 (671 aa).

Cys2 (nucleophile) is an active-site residue. The region spanning 2-220 (CGISAFITHP…PGHYLICRPN (219 aa)) is the Glutamine amidotransferase type-2 domain. An Asparagine synthetase domain is found at 251 to 639 (VRERLLEAVR…TQDAMDGAFN (389 aa)).

The protein belongs to the asparagine synthetase family.

Its pathway is pigment biosynthesis. In terms of biological role, amidase; part of the gene cluster that mediates the biosynthesis of the yellow pigment chrysogine. Pyruvic acid and anthranilic acid are likely substrates for the nonribosomal peptide synthetase chry1/NRPS14, with pyruvic acid adenylated by the first A domain and anthranilic acid by the second. If pyruvic acid and anthranilic acid are merged and released from chry1/NRPS14 by hydrolysis, a subsequent amidation would lead to 2-pyruvoylaminobenzamide. This process is probably catalyzed by the amidotransferase chry2 using glutamine as amino donor. The dehydrogenase chry5 that has a terminal berberine bridge domain for C-N cyclization could catalyze the cyclization of 2-pyruvoylaminobenzamide to yield acetyl-4(3H)-quinazolidinone. A final reduction of acetyl-4(3H)-quinazolidinone catalyzed by the oxidoreductase chry4 would result in chrysogine. The chain is Amidase chry2 from Gibberella zeae (strain ATCC MYA-4620 / CBS 123657 / FGSC 9075 / NRRL 31084 / PH-1) (Wheat head blight fungus).